The sequence spans 218 residues: Hypoxanthine-guanine phosphoribosyltransferase (218 aa).

Alanine 2 is modified (N-acetylalanine). Lysine 69 is a GMP binding site. Position 103 is an N6-acetyllysine (lysine 103). Lysine 115 participates in a covalent cross-link: Glycyl lysine isopeptide (Lys-Gly) (interchain with G-Cter in SUMO1); alternate. Lysine 115 is covalently cross-linked (Glycyl lysine isopeptide (Lys-Gly) (interchain with G-Cter in SUMO2); alternate). GMP contacts are provided by residues 134-142 (EDIIDTGKT), lysine 166, 186-188 (KFV), and aspartate 194. The Proton acceptor role is filled by aspartate 138. Threonine 142 carries the post-translational modification Phosphothreonine. Aspartate 194 contacts Mg(2+).

This sequence belongs to the purine/pyrimidine phosphoribosyltransferase family. Homotetramer. Mg(2+) is required as a cofactor.

The protein localises to the cytoplasm. It carries out the reaction IMP + diphosphate = hypoxanthine + 5-phospho-alpha-D-ribose 1-diphosphate. It catalyses the reaction GMP + diphosphate = guanine + 5-phospho-alpha-D-ribose 1-diphosphate. It functions in the pathway purine metabolism; IMP biosynthesis via salvage pathway; IMP from hypoxanthine: step 1/1. Functionally, converts guanine to guanosine monophosphate, and hypoxanthine to inosine monophosphate. Transfers the 5-phosphoribosyl group from 5-phosphoribosylpyrophosphate onto the purine. Plays a central role in the generation of purine nucleotides through the purine salvage pathway. In Cricetulus griseus (Chinese hamster), this protein is Hypoxanthine-guanine phosphoribosyltransferase (HPRT1).